The primary structure comprises 135 residues: UPF0201 protein TON_1346 (135 aa).

Belongs to the UPF0201 family.

This is UPF0201 protein TON_1346 from Thermococcus onnurineus (strain NA1).